Consider the following 643-residue polypeptide: Threonine--tRNA ligase (643 aa).

In terms of domain architecture, TGS spans methionine 1 to threonine 61. A catalytic region spans residues aspartate 240–proline 540. The Zn(2+) site is built by cysteine 335, histidine 386, and histidine 517.

It belongs to the class-II aminoacyl-tRNA synthetase family. Homodimer. It depends on Zn(2+) as a cofactor.

The protein localises to the cytoplasm. The enzyme catalyses tRNA(Thr) + L-threonine + ATP = L-threonyl-tRNA(Thr) + AMP + diphosphate + H(+). In terms of biological role, catalyzes the attachment of threonine to tRNA(Thr) in a two-step reaction: L-threonine is first activated by ATP to form Thr-AMP and then transferred to the acceptor end of tRNA(Thr). Also edits incorrectly charged L-seryl-tRNA(Thr). This chain is Threonine--tRNA ligase, found in Clostridium perfringens (strain ATCC 13124 / DSM 756 / JCM 1290 / NCIMB 6125 / NCTC 8237 / Type A).